Here is a 130-residue protein sequence, read N- to C-terminus: Small ribosomal subunit protein uS11 (130 aa).

This sequence belongs to the universal ribosomal protein uS11 family. Part of the 30S ribosomal subunit. Interacts with proteins S7 and S18. Binds to IF-3.

Located on the platform of the 30S subunit, it bridges several disparate RNA helices of the 16S rRNA. Forms part of the Shine-Dalgarno cleft in the 70S ribosome. This chain is Small ribosomal subunit protein uS11, found in Borreliella afzelii (strain PKo) (Borrelia afzelii).